A 302-amino-acid chain; its full sequence is Pyridoxal 5'-phosphate synthase subunit PdxS (302 aa).

Aspartate 32 provides a ligand contact to D-ribose 5-phosphate. Lysine 89 functions as the Schiff-base intermediate with D-ribose 5-phosphate in the catalytic mechanism. Glycine 161 contacts D-ribose 5-phosphate. A D-glyceraldehyde 3-phosphate-binding site is contributed by arginine 173. D-ribose 5-phosphate-binding positions include glycine 222 and 243–244; that span reads GS. Residues 278–302 form a disordered region; the sequence is GIGKGMKGQSNEDLPDEEKLQGRGV.

It belongs to the PdxS/SNZ family. In the presence of PdxT, forms a dodecamer of heterodimers.

It carries out the reaction aldehydo-D-ribose 5-phosphate + D-glyceraldehyde 3-phosphate + L-glutamine = pyridoxal 5'-phosphate + L-glutamate + phosphate + 3 H2O + H(+). It functions in the pathway cofactor biosynthesis; pyridoxal 5'-phosphate biosynthesis. Functionally, catalyzes the formation of pyridoxal 5'-phosphate from ribose 5-phosphate (RBP), glyceraldehyde 3-phosphate (G3P) and ammonia. The ammonia is provided by the PdxT subunit. Can also use ribulose 5-phosphate and dihydroxyacetone phosphate as substrates, resulting from enzyme-catalyzed isomerization of RBP and G3P, respectively. This chain is Pyridoxal 5'-phosphate synthase subunit PdxS, found in Halorubrum lacusprofundi (strain ATCC 49239 / DSM 5036 / JCM 8891 / ACAM 34).